Reading from the N-terminus, the 221-residue chain is Histone H1.3 (221 aa).

Positions 1-17 (MSETAPAAPAAPAPVEK) are enriched in low complexity. Residues 1-42 (MSETAPAAPAAPAPVEKTPVKKKAKKTGAAAGKRKASGPPVS) form a disordered region. An N-acetylserine modification is found at S2. S2 bears the Phosphoserine mark. K17 bears the N6-acetyllysine mark. A Phosphothreonine modification is found at T18. The segment covering 20–36 (VKKKAKKTGAAAGKRKA) has biased composition (basic residues). N6-(beta-hydroxybutyryl)lysine occurs at positions 33, 35, and 53. Residues 37 to 110 (SGPPVSELIT…GASGSFKLNK (74 aa)) enclose the H15 domain. A Citrulline modification is found at R55. N6-(beta-hydroxybutyryl)lysine is present on residues K65, K86, and K91. Residues 92–221 (GTLVQTKGTG…KAKKAAPRKK (130 aa)) form a disordered region. Phosphoserine; by PKC is present on S105. 2 positions are modified to N6-(beta-hydroxybutyryl)lysine: K107 and K141. Composition is skewed to basic residues over residues 120–141 (KAKKAGAAKAKKPAGAAKKPKK), 150–161 (KTAKKTPKKAKK), 170–187 (KVSKSPKKVKAAKPKKAA), and 194–221 (KAPKAKASKPKASKPKATKAKKAAPRKK).

This sequence belongs to the histone H1/H5 family. Post-translationally, H1 histones are progressively phosphorylated during the cell cycle, becoming maximally phosphorylated during late G2 phase and M phase, and being dephosphorylated sharply thereafter. Hydroxybutyrylation of histones is induced by starvation. In terms of processing, citrullination at Arg-55 (H1R54ci) by PADI4 takes place within the DNA-binding site of H1 and results in its displacement from chromatin and global chromatin decondensation, thereby promoting pluripotency and stem cell maintenance.

It is found in the nucleus. It localises to the chromosome. Functionally, histone H1 protein binds to linker DNA between nucleosomes forming the macromolecular structure known as the chromatin fiber. Histones H1 are necessary for the condensation of nucleosome chains into higher-order structured fibers. Also acts as a regulator of individual gene transcription through chromatin remodeling, nucleosome spacing and DNA methylation. This chain is Histone H1.3, found in Mus musculus (Mouse).